The primary structure comprises 551 residues: Solute carrier family 22 member 6 (551 aa).

Residues 1-23 (MAFNDLLKQVGGVGRFQRIQVTL) lie on the Cytoplasmic side of the membrane. Residues 24 to 44 (VVLPLLLMASHNTLQNFTAAI) form a helical membrane-spanning segment. Residues 45–135 (PPHHCRPPAH…LVCSHRALRQ (91 aa)) are Extracellular-facing. N-linked (GlcNAc...) asparagine glycosylation is found at N56, N92, and N113. The helical transmembrane segment at 136–156 (LGQSLYMAGVLIGAMVFGYLA) threads the bilayer. Residues 157-164 (DRLGRRKV) are Cytoplasmic-facing. The helical transmembrane segment at 165–187 (LILNYLQTAVSGTCAAFSPNFTV) threads the bilayer. The Extracellular segment spans residues 188 to 195 (YCTFRLLS). The helical transmembrane segment at 196-216 (GMSLAGIALNCMTLNVEWMPI) threads the bilayer. Residues 217–224 (HTRAYVGT) are Cytoplasmic-facing. A helical membrane pass occupies residues 225–245 (LAGYVYSTGQFLLAGVAYAVP). Residues 246-248 (HWR) lie on the Extracellular side of the membrane. Residues 249-269 (YLQLLVSVPFFAFFVYSWFFI) form a helical membrane-spanning segment. Over 270 to 337 (ESARWYSTPG…ELLRCPALRH (68 aa)) the chain is Cytoplasmic. Residues 338–358 (LFLCLSLLWFATSFAYYGLVM) traverse the membrane as a helical segment. The Extracellular segment spans residues 359 to 368 (DLQGFGVSIY). A helical transmembrane segment spans residues 369–389 (LIQVIFGAVDLPAKLVCFLVI). Topologically, residues 390–395 (NSLGRR) are cytoplasmic. Residues 396–416 (PAQMASLLLAGICILVNGVIP) traverse the membrane as a helical segment. Topologically, residues 417–425 (RDQSIVRTS) are extracellular. A helical transmembrane segment spans residues 426-446 (LAVLGKGCLASSFNCIFLYTG). Residues 447–484 (ELYPTMIRQTGLGMGSTMARVGSIVSPLVSMTSELYPS) are Cytoplasmic-facing. A helical membrane pass occupies residues 485-505 (LPLFIYGAVPVAASAATALLP). Over 506 to 551 (ETLGQPLPDTVQDLESRRRGKPRRQQQEQQKQMVPLQASVQEKNGL) the chain is Extracellular. Residues 520 to 551 (ESRRRGKPRRQQQEQQKQMVPLQASVQEKNGL) form a disordered region.

This sequence belongs to the major facilitator (TC 2.A.1) superfamily. Organic cation transporter (TC 2.A.1.19) family. Post-translationally, glycosylated. Glycosylation is necessary for proper targeting of the transporter to the plasma membrane.

Its subcellular location is the basolateral cell membrane. It localises to the basal cell membrane. The enzyme catalyses (6R)-L-erythro-5,6,7,8-tetrahydrobiopterin(out) + a dicarboxylate(in) = (6R)-L-erythro-5,6,7,8-tetrahydrobiopterin(in) + a dicarboxylate(out). It carries out the reaction L-erythro-7,8-dihydrobiopterin(out) + a dicarboxylate(in) = L-erythro-7,8-dihydrobiopterin(in) + a dicarboxylate(out). It catalyses the reaction L-sepiapterin(out) + a dicarboxylate(in) = L-sepiapterin(in) + a dicarboxylate(out). The catalysed reaction is prostaglandin F2alpha(out) + a dicarboxylate(in) = prostaglandin F2alpha(in) + a dicarboxylate(out). The enzyme catalyses prostaglandin E2(out) + a dicarboxylate(in) = prostaglandin E2(in) + a dicarboxylate(out). It carries out the reaction 3',5'-cyclic AMP(out) + a dicarboxylate(in) = 3',5'-cyclic AMP(in) + a dicarboxylate(out). It catalyses the reaction 3',5'-cyclic GMP(out) + a dicarboxylate(in) = 3',5'-cyclic GMP(in) + a dicarboxylate(out). The catalysed reaction is urate(out) + a dicarboxylate(in) = urate(in) + a dicarboxylate(out). The enzyme catalyses kynurenate(out) + glutarate(in) = kynurenate(in) + glutarate(out). It carries out the reaction (indol-3-yl)acetate(out) + a dicarboxylate(in) = (indol-3-yl)acetate(in) + a dicarboxylate(out). It catalyses the reaction indoxyl sulfate(out) + a dicarboxylate(in) = indoxyl sulfate(in) + a dicarboxylate(out). The catalysed reaction is N-benzoylglycine(out) + a dicarboxylate(in) = N-benzoylglycine(in) + a dicarboxylate(out). The enzyme catalyses 3-carboxy-4-methyl-5-propyl-2-furanpropanoate(out) + a dicarboxylate(in) = 3-carboxy-4-methyl-5-propyl-2-furanpropanoate(in) + a dicarboxylate(out). Secondary active transporter that functions as a Na(+)-independent organic anion (OA)/dicarboxylate antiporter where the uptake of one molecule of OA into the cell is coupled with an efflux of one molecule of intracellular dicarboxylate such as 2-oxoglutarate or glutarate. Mediates the uptake of OA across the basolateral side of proximal tubule epithelial cells, thereby contributing to the renal elimination of endogenous OA from the systemic circulation into the urine. Functions as a biopterin transporters involved in the uptake and the secretion of coenzymes tetrahydrobiopterin (BH4), dihydrobiopterin (BH2) and sepiapterin to urine, thereby determining baseline levels of blood biopterins. Transports prostaglandin E2 (PGE2) and prostaglandin F2-alpha (PGF2-alpha) and may contribute to their renal excretion. Also mediates the uptake of cyclic nucleotides such as cAMP and cGMP. Involved in the transport of neuroactive tryptophan metabolites kynurenate (KYNA) and xanthurenate (XA) and may contribute to their secretion from the brain. May transport glutamate. Also involved in the disposition of uremic toxins and potentially toxic xenobiotics by the renal organic anion secretory pathway, helping reduce their undesired toxicological effects on the body. Uremic toxins include the indoxyl sulfate (IS), hippurate/N-benzoylglycine (HA), indole acetate (IA), 3-carboxy-4- methyl-5-propyl-2-furanpropionate (CMPF) and urate. Xenobiotics include the mycotoxin ochratoxin (OTA). May also contribute to the transport of organic compounds in testes across the blood-testis-barrier. May also work as a bidirectional OA/dicarboxylate exchanger. This chain is Solute carrier family 22 member 6, found in Oryctolagus cuniculus (Rabbit).